A 150-amino-acid polypeptide reads, in one-letter code: Snaclec bothrojaracin subunit beta (150 aa).

An N-terminal signal peptide occupies residues 1–23; the sequence is MGRFIFVSFGLLVVFLSLSGTAA. Intrachain disulfides connect cysteine 25–cysteine 36, cysteine 53–cysteine 146, and cysteine 123–cysteine 138. The 116-residue stretch at 32 to 147 folds into the C-type lectin domain; it reads YEGSCYRVFE…CTKLEYFVCE (116 aa).

The protein belongs to the snaclec family. In terms of assembly, heterodimer of subunits alpha and beta; disulfide-linked. As to expression, expressed by the venom gland.

The protein localises to the secreted. Its function is as follows. This potent antithrombotic agent acts in a calcium-independent manner. Exerts its anticoagulant effect by two distinct mechanisms. It binds to activated thrombin through exosite 1, blocking fibrinogen clotting, platelet activation, factor V activation and other effects, and it interacts with prothrombin (F2), decreasing its proteolytic activation -especially in the presence of factor Va. In vivo, intravenous injection before thrombosis induction causes a significant decrease in thrombus weight. Furthermore, BJC shows a prolonged effect by remaining in the plasma bound to prothrombin for at least 12 hours. This chain is Snaclec bothrojaracin subunit beta, found in Bothrops jararaca (Jararaca).